The following is a 356-amino-acid chain: S-adenosylmethionine:tRNA ribosyltransferase-isomerase (356 aa).

The protein belongs to the QueA family. Monomer.

It localises to the cytoplasm. It carries out the reaction 7-aminomethyl-7-carbaguanosine(34) in tRNA + S-adenosyl-L-methionine = epoxyqueuosine(34) in tRNA + adenine + L-methionine + 2 H(+). The protein operates within tRNA modification; tRNA-queuosine biosynthesis. Transfers and isomerizes the ribose moiety from AdoMet to the 7-aminomethyl group of 7-deazaguanine (preQ1-tRNA) to give epoxyqueuosine (oQ-tRNA). The chain is S-adenosylmethionine:tRNA ribosyltransferase-isomerase from Yersinia pestis.